We begin with the raw amino-acid sequence, 1403 residues long: DNA-directed RNA polymerase subunit beta' (1403 aa).

Residues C71, C73, C86, and C89 each contribute to the Zn(2+) site. The Mg(2+) site is built by D462, D464, and D466. Residues C811, C885, C892, and C895 each coordinate Zn(2+).

The protein belongs to the RNA polymerase beta' chain family. The RNAP catalytic core consists of 2 alpha, 1 beta, 1 beta' and 1 omega subunit. When a sigma factor is associated with the core the holoenzyme is formed, which can initiate transcription. Requires Mg(2+) as cofactor. Zn(2+) serves as cofactor.

The enzyme catalyses RNA(n) + a ribonucleoside 5'-triphosphate = RNA(n+1) + diphosphate. Its function is as follows. DNA-dependent RNA polymerase catalyzes the transcription of DNA into RNA using the four ribonucleoside triphosphates as substrates. This is DNA-directed RNA polymerase subunit beta' from Bartonella tribocorum (strain CIP 105476 / IBS 506).